We begin with the raw amino-acid sequence, 234 residues long: MRLVQLSRHSIAFPSPEGALREPNGLLALGGDLSPARLLMAYQRGIFPWFSPGDPILWWSPDPRAVLWPESLHISRSMKRFHKRSPYRVTMNYAFGQVIEGCASDREEGTWITRGVVEAYHRLHELGHAHSIEVWREDELVGGMYGVAQGTLFCGESMFSRMENASKTALLVFCEEFIGHGGKLIDCQVLNDHTASLGACEIPRRDYLNYLNQMRLGRLPNNFWVPRCLFSPQE.

This sequence belongs to the L/F-transferase family.

The protein resides in the cytoplasm. The catalysed reaction is N-terminal L-lysyl-[protein] + L-leucyl-tRNA(Leu) = N-terminal L-leucyl-L-lysyl-[protein] + tRNA(Leu) + H(+). It catalyses the reaction N-terminal L-arginyl-[protein] + L-leucyl-tRNA(Leu) = N-terminal L-leucyl-L-arginyl-[protein] + tRNA(Leu) + H(+). The enzyme catalyses L-phenylalanyl-tRNA(Phe) + an N-terminal L-alpha-aminoacyl-[protein] = an N-terminal L-phenylalanyl-L-alpha-aminoacyl-[protein] + tRNA(Phe). Functionally, functions in the N-end rule pathway of protein degradation where it conjugates Leu, Phe and, less efficiently, Met from aminoacyl-tRNAs to the N-termini of proteins containing an N-terminal arginine or lysine. The chain is Leucyl/phenylalanyl-tRNA--protein transferase from Shigella boydii serotype 18 (strain CDC 3083-94 / BS512).